The following is a 663-amino-acid chain: Bicarbonate transport ATP-binding protein CmpC (663 aa).

Positions 5–239 constitute an ABC transporter domain; the sequence is VAVENIEKSF…RPRKRMDVVH (235 aa). ATP is bound at residue 42-49; the sequence is GHSGCGKS. Residues 281–663 form a cmpA-like region; it reads LEIGYVPLMA…LDQPRPIAAA (383 aa).

This sequence belongs to the ABC transporter superfamily. Nitrate/nitrite/cyanate uptake transporter (NitT) (TC 3.A.1.16) family. In terms of assembly, the complex is composed of two ATP-binding proteins (CmpC and CmpD), a transmembrane protein (CmpB) and a solute-binding protein (CmpA).

It localises to the cell inner membrane. Functionally, part of the ABC transporter complex CmpABCD involved in bicarbonate transport. Responsible for energy coupling to the transport system. This chain is Bicarbonate transport ATP-binding protein CmpC (cmpC), found in Synechococcus elongatus (strain ATCC 33912 / PCC 7942 / FACHB-805) (Anacystis nidulans R2).